Reading from the N-terminus, the 412-residue chain is Multifunctional CCA protein (412 aa).

ATP is bound by residues Gly8 and Arg11. Residues Gly8 and Arg11 each coordinate CTP. Mg(2+) contacts are provided by Asp21 and Asp23. Residues Arg91, Arg137, and Arg140 each coordinate ATP. CTP is bound by residues Arg91, Arg137, and Arg140. Positions 228 to 329 (TGIHTMMVLA…LKVFDKADAW (102 aa)) constitute an HD domain.

The protein belongs to the tRNA nucleotidyltransferase/poly(A) polymerase family. Bacterial CCA-adding enzyme type 1 subfamily. Monomer. Can also form homodimers and oligomers. It depends on Mg(2+) as a cofactor. Requires Ni(2+) as cofactor.

It carries out the reaction a tRNA precursor + 2 CTP + ATP = a tRNA with a 3' CCA end + 3 diphosphate. The catalysed reaction is a tRNA with a 3' CCA end + 2 CTP + ATP = a tRNA with a 3' CCACCA end + 3 diphosphate. In terms of biological role, catalyzes the addition and repair of the essential 3'-terminal CCA sequence in tRNAs without using a nucleic acid template. Adds these three nucleotides in the order of C, C, and A to the tRNA nucleotide-73, using CTP and ATP as substrates and producing inorganic pyrophosphate. tRNA 3'-terminal CCA addition is required both for tRNA processing and repair. Also involved in tRNA surveillance by mediating tandem CCA addition to generate a CCACCA at the 3' terminus of unstable tRNAs. While stable tRNAs receive only 3'-terminal CCA, unstable tRNAs are marked with CCACCA and rapidly degraded. This Aeromonas hydrophila subsp. hydrophila (strain ATCC 7966 / DSM 30187 / BCRC 13018 / CCUG 14551 / JCM 1027 / KCTC 2358 / NCIMB 9240 / NCTC 8049) protein is Multifunctional CCA protein.